The primary structure comprises 434 residues: MVATPDDPRAQTIVDLFNGQGSAPAPFDVLTSALSFPTRDQEQWWRKTGPMFGQMLASSGYTLDQQYRHLTFYYNQLVPRLGPHPATFHSSLTVSGLPMEFSINYQQKGAHPMVRIGAEPIDSFSGTERDPFNQIPPAEMVNHFSRAGVKGFDPELYAYFEPKHSLTREQQARLPKEVPGGDKLKTQYAFGFDFKGDEVSLKGYSYPGLKATMAGQEVAKLVGDGVKDLKNQGKLDCTEAWAAVEAYMTELNGWGYHNLWAWDYVSPAKSRLKFYSFVMDVVDKTKLEELWTLNGRATSPAHQEGLRHLKELWDIIDLKNVGKRDLPADAPQIPEDAAPMVWNYEMTAGNPLPFGKGYFPLQGLNDAGCIQKLVKFFELMGWKDLAAKYPETIQSFYPGLDLSKTSHLLMWVSYTYSEKTGVYLSIYNHPCPEK.

Residues 91 to 92 (SL) and glutamate 100 each bind L-tryptophan. Arginine 115, lysine 202, and tyrosine 204 together coordinate substrate. Tyrosine 206 lines the L-tryptophan pocket. 6 residues coordinate substrate: arginine 271, lysine 273, tyrosine 275, tyrosine 358, tyrosine 423, and tyrosine 427.

This sequence belongs to the tryptophan dimethylallyltransferase family. As to quaternary structure, homodimer.

It catalyses the reaction L-tryptophan + dimethylallyl diphosphate = 4-(3-methylbut-2-enyl)-L-tryptophan + diphosphate. Its pathway is secondary metabolite biosynthesis. Nonribosomal peptide synthase involved in the synthesis of nidulanin A and derived compounds. Nidulanin A is a tetracyclopeptide with the sequence L-Phe-L-Kyn-L-Val-D-Val and an isoprene unit N-linked to the amino group of L-kynurenine. The NRPS nlsA is responsible of the synthesis of the cyclopeptide and the prenyltransferase nptA adds the isoprene unit on the L-kynurenine residue of nidulanin A. Further modifications lead to additional oxygenated related compounds. This chain is Tryptophan dimethylallyltransferase nptA, found in Emericella nidulans (strain FGSC A4 / ATCC 38163 / CBS 112.46 / NRRL 194 / M139) (Aspergillus nidulans).